A 256-amino-acid chain; its full sequence is Nuclear shuttle protein (256 aa).

A Bipartite nuclear localization signal motif is present at residues 21 to 42; the sequence is NYGFKRTFVVKRGDAKRRQTQV. The Nuclear localization signal signature appears at 81-96; the sequence is QLCKTQPNRSRSYIKL. The tract at residues 150–187 is interaction with Arabidopsis thaliana NSI protein; sequence ELFGARIHSLGNLAVTPALKERFYILHVLKRVISVEKD.

This sequence belongs to the begomovirus nuclear shuttle protein family. As to quaternary structure, binds to single-stranded and double-stranded viral DNA. Interacts with the host nuclear shuttle interacting (NSI) protein. This interaction may allow NSP to recruit NSI monomers to the viral genome and thus regulate nuclear export of viral genome by NSP.

Its subcellular location is the host nucleus. The protein localises to the host cytoplasm. It localises to the host cell membrane. Functionally, binds to the genomic viral ssDNA, shuttles it into and out of the cell nucleus. Begomoviruses use 2 proteins to transport their DNA from cell to cell. The nuclear shuttle protein (NSP) shuttles it between nucleus and cytoplasm and the movement protein (MP) probably transports the DNA-NSP complex to the cell periphery and facilitates movement across the cell wall. This chain is Nuclear shuttle protein, found in Pepper huasteco yellow vein virus (PHYVV).